The sequence spans 147 residues: Cytochrome c-type biogenesis protein CcmE (147 aa).

Residues 1–7 are Cytoplasmic-facing; it reads MKPRHKR. A helical; Signal-anchor for type II membrane protein membrane pass occupies residues 8–28; the sequence is AAIIAGGLAALGIAAYLVLNA. Residues 29–147 lie on the Periplasmic side of the membrane; that stretch reads FQSNLVFFFS…QIQKTIKSLK (119 aa). Positions 121 and 125 each coordinate heme.

This sequence belongs to the CcmE/CycJ family.

The protein localises to the cell inner membrane. Its function is as follows. Heme chaperone required for the biogenesis of c-type cytochromes. Transiently binds heme delivered by CcmC and transfers the heme to apo-cytochromes in a process facilitated by CcmF and CcmH. The protein is Cytochrome c-type biogenesis protein CcmE of Albidiferax ferrireducens (strain ATCC BAA-621 / DSM 15236 / T118) (Rhodoferax ferrireducens).